The chain runs to 329 residues: Acetyl-coenzyme A carboxylase carboxyl transferase subunit alpha (329 aa).

In terms of domain architecture, CoA carboxyltransferase C-terminal spans 40–294 (QLESLAARRR…RAAIERHLEQ (255 aa)).

It belongs to the AccA family. As to quaternary structure, acetyl-CoA carboxylase is a heterohexamer composed of biotin carboxyl carrier protein (AccB), biotin carboxylase (AccC) and two subunits each of ACCase subunit alpha (AccA) and ACCase subunit beta (AccD).

The protein resides in the cytoplasm. It catalyses the reaction N(6)-carboxybiotinyl-L-lysyl-[protein] + acetyl-CoA = N(6)-biotinyl-L-lysyl-[protein] + malonyl-CoA. Its pathway is lipid metabolism; malonyl-CoA biosynthesis; malonyl-CoA from acetyl-CoA: step 1/1. In terms of biological role, component of the acetyl coenzyme A carboxylase (ACC) complex. First, biotin carboxylase catalyzes the carboxylation of biotin on its carrier protein (BCCP) and then the CO(2) group is transferred by the carboxyltransferase to acetyl-CoA to form malonyl-CoA. The chain is Acetyl-coenzyme A carboxylase carboxyl transferase subunit alpha from Synechococcus sp. (strain CC9605).